A 236-amino-acid polypeptide reads, in one-letter code: MSSPRPSAELALLDIEGTTSPTAAVLSSLFPYARARLGPWVRDHGDDPEVRRIVAEARSLLGEADAPVQRVVAALTRWSDDDRKVAPLKALQGLIWAAGFAAGELTGELFDDVAPALRRWHAAGVRLAVFSSGSVLAQRAWFAATPAGDLTGLFDGYFDIDSAGPKRDPAAYRRIATELAVTPRRAVFLSDVSAELDAASAAGFATVAVLRPGEPHHLAGNHPCVASFAEMAVDAA.

This sequence belongs to the HAD-like hydrolase superfamily. MasA/MtnC family. Monomer. Mg(2+) is required as a cofactor.

The enzyme catalyses 5-methylsulfanyl-2,3-dioxopentyl phosphate + H2O = 1,2-dihydroxy-5-(methylsulfanyl)pent-1-en-3-one + phosphate. It functions in the pathway amino-acid biosynthesis; L-methionine biosynthesis via salvage pathway; L-methionine from S-methyl-5-thio-alpha-D-ribose 1-phosphate: step 3/6. The protein operates within amino-acid biosynthesis; L-methionine biosynthesis via salvage pathway; L-methionine from S-methyl-5-thio-alpha-D-ribose 1-phosphate: step 4/6. Bifunctional enzyme that catalyzes the enolization of 2,3-diketo-5-methylthiopentyl-1-phosphate (DK-MTP-1-P) into the intermediate 2-hydroxy-3-keto-5-methylthiopentenyl-1-phosphate (HK-MTPenyl-1-P), which is then dephosphorylated to form the acireductone 1,2-dihydroxy-3-keto-5-methylthiopentene (DHK-MTPene). In Frankia alni (strain DSM 45986 / CECT 9034 / ACN14a), this protein is Enolase-phosphatase E1.